Consider the following 151-residue polypeptide: FIS1-related protein fis-2 (151 aa).

Residues 126–146 (LIGAAIVGGGALALAGLVAIF) form a helical membrane-spanning segment.

Belongs to the FIS1 family.

The protein localises to the mitochondrion outer membrane. It localises to the peroxisome membrane. It is found in the mitochondrion. In terms of biological role, involved in the fragmentation of the mitochondrial network. Involved in perinuclear clustering of the mitochondrial network. May act, redundantly with fis-1, downstream of mitochondrial fission, before the fission products participate in mitochondrial homeostasis, mitophagy, or apoptosis. Plays a role in apoptosis by promoting mitochondrial elimination and cell-death execution, acting downstream of caspase ced-3, and perhaps independently of dynamin GTPase drp-1, caspase ced-9 and apoptosis-inducing factor AIFM/wah-1. The sequence is that of FIS1-related protein fis-2 from Caenorhabditis elegans.